The sequence spans 269 residues: Aquaporin-7 (269 aa).

At 1-20 (MAGSVLENIQSVLQKTWVRE) the chain is on the cytoplasmic side. Ser4 bears the Phosphoserine mark. A helical transmembrane segment spans residues 21–38 (FLAEFLSTYVLMVFGLGS). The Extracellular segment spans residues 39–51 (VAHMVLGERLGSY). Residues 52 to 69 (LGVNLGFGFGVTMGIHVA) form a helical membrane-spanning segment. The Cytoplasmic segment spans residues 70–73 (GGIS). Positions 74 to 87 (GAHMNAAVTFTNCA) form an intramembrane region, discontinuously helical. An NPA 1 motif is present at residues 78–80 (NAA). Topologically, residues 88-95 (LGRMAWKK) are cytoplasmic. The helical transmembrane segment at 96 to 116 (FPIYVLGQFLGSFLAAATTYL) threads the bilayer. Residues 117–151 (IFYGAINHYAGGELLVTGPKSTANIFATYLPEHMT) are Extracellular-facing. The chain crosses the membrane as a helical span at residues 152-172 (LWRGFVDEVFVTGMLQLCIFA). Over 173–184 (ITDKLNSPALQG) the chain is Cytoplasmic. The helical transmembrane segment at 185–201 (TEPLMIGILVCVLGVSL) threads the bilayer. At 202 to 205 (GMNT) the chain is on the extracellular side. The discontinuously helical intramembrane region spans 206–219 (GYAINPSRDLPPRF). The NPA 2 motif lies at 210-212 (NPS). Over 220-237 (FTFIAGWGKKVFSAGNNW) the chain is Extracellular. Residues 238 to 259 (WWVPVVAPLLGAYLGGIVYLGL) form a helical membrane-spanning segment. The Cytoplasmic portion of the chain corresponds to 260-269 (IHAGIPPQGS).

This sequence belongs to the MIP/aquaporin (TC 1.A.8) family. Homotetramer; each monomer provides an independent glycerol/water pore. Two homotetramers on opposing membranes can dimerize, forming a cell-cell junction. Interacts with PLIN1. Post-translationally, phosphorylation by PKA could prevent the interaction with PLIN1. Detected in heart, kidney and testis.

The protein resides in the cell membrane. It is found in the cytoplasmic vesicle membrane. Its subcellular location is the lipid droplet. It carries out the reaction glycerol(in) = glycerol(out). It catalyses the reaction H2O(in) = H2O(out). The enzyme catalyses urea(in) = urea(out). Its activity is regulated as follows. Glycerol transport is regulated by pH, with the porin being permeable to glycerol at pH 7.4 but not at pH 5.5. Water permeability, however, is not influenced by pH. Not inhibited by mercury ions. Functionally, aquaglyceroporins form homotetrameric transmembrane channels, with each monomer independently mediating glycerol and water transport across the plasma membrane along their osmotic gradient. Could also be permeable to urea. Mediates the efflux of glycerol, formed upon triglyceride hydrolysis, to avoid its accumulation in adipocytes and to make it available to other tissues. In the kidney, mediates the reabsorption of glycerol, preventing its loss in urine, again participating to energy homeostasis. In pancreatic beta cells, it also mediates the efflux of glycerol, regulating its intracellular levels. The protein is Aquaporin-7 of Rattus norvegicus (Rat).